A 96-amino-acid polypeptide reads, in one-letter code: Protein RnfH (96 aa).

This sequence belongs to the UPF0125 (RnfH) family.

In Citrobacter koseri (strain ATCC BAA-895 / CDC 4225-83 / SGSC4696), this protein is Protein RnfH.